A 201-amino-acid polypeptide reads, in one-letter code: Recombination protein RecR (201 aa).

Residues 57 to 72 form a C4-type zinc finger; the sequence is CADCRTFTEQDVCNIC. A Toprim domain is found at 81-176; the sequence is GQICVVESPA…EASRIAHGVP (96 aa).

It belongs to the RecR family.

May play a role in DNA repair. It seems to be involved in an RecBC-independent recombinational process of DNA repair. It may act with RecF and RecO. In Salmonella choleraesuis (strain SC-B67), this protein is Recombination protein RecR.